The following is a 456-amino-acid chain: Probable transcription factor At3g04930 (456 aa).

The segment at 1-71 is disordered; the sequence is MTSDHRDALF…LNSPSTSSLP (71 aa). Acidic residues-rich tracts occupy residues 15–38 and 50–62; these read ESPD…DLRD and AEAE…EEDL. Ser-16 carries the post-translational modification Phosphoserine.

The protein belongs to the GeBP family.

In Arabidopsis thaliana (Mouse-ear cress), this protein is Probable transcription factor At3g04930.